The primary structure comprises 180 residues: CD-NTase/cGAS isopeptidase (180 aa).

Residues 33–165 (IVISSSTIEQ…AGSYSLSASV (133 aa)) form the MPN domain. The active-site Proton donor/acceptor is the E54. Residues H115, H117, and D128 each coordinate Zn(2+).

Belongs to the peptidase M67B family. Cap3 isopeptidase subfamily.

Functionally, metalloprotease priming reversal component of a CBASS antivirus system. CBASS (cyclic oligonucleotide-based antiphage signaling system) provides immunity against bacteriophages. The CD-NTase protein (CdnD) synthesizes cyclic nucleotides in response to infection; these serve as specific second messenger signals. The signals activate a diverse range of effectors, leading to bacterial cell death and thus abortive phage infection. A type II-C(AAG) CBASS system. Its function is as follows. Reverses the primed state of DncV, the CD-NTase. Cleaves a CdnD-GFP (green fluorescent protein) fusion protein precisely at the C-terminus of CdnD. Overexpression decreases the efficacy of CBASS protection against phage T2. Antagonism of phage defense upon overexpression is CBASS-system specific, Cap3 from this bacteria only antagonizes its cognate CBASS system and not that of C.freundii, E.coli or V.cholerae. In terms of biological role, protects E.coli against phage T2 infection. When the cdnD-cap2-cap3-cap4 operon is introduced in E.coli there is a more than 10(3) decrease in the efficiency of T2 plaque formation. The operon does not protect against phage T5 and only about 10-fold against T7. The protein is CD-NTase/cGAS isopeptidase of Enterobacter hormaechei subsp. hoffmannii (strain UCI 50).